The chain runs to 388 residues: Omega-hydroxy-beta-dihydromenaquinone-9 sulfotransferase Stf3 (388 aa).

This sequence belongs to the Stf3 family.

The enzyme catalyses omega-hydroxy-beta-dihydromenaquinone-9 + 3'-phosphoadenylyl sulfate = omega-sulfo-beta-dihydromenaquinone-9 + adenosine 3',5'-bisphosphate + H(+). Involved in the biosynthesis of sulfomenaquinone (SMK, initially named S881 on the basis of its mass), which is localized in the outer envelope of M.bovis and negatively regulates its virulence. Catalyzes the transfer of a sulfonate group from 3'-phosphoadenosine-5'-phosphosulfate (PAPS) to omega-hydroxy-beta-dihydromenaquinone-9, generating omega-sulfo-beta-dihydromenaquinone-9 (sulfomenaquinone). This chain is Omega-hydroxy-beta-dihydromenaquinone-9 sulfotransferase Stf3, found in Mycobacterium bovis (strain ATCC BAA-935 / AF2122/97).